A 288-amino-acid polypeptide reads, in one-letter code: Sulfur carrier protein FdhD (288 aa).

The Cysteine persulfide intermediate role is filled by cysteine 122. 268 to 273 (FVRGER) serves as a coordination point for Mo-bis(molybdopterin guanine dinucleotide).

It belongs to the FdhD family.

The protein localises to the cytoplasm. Required for formate dehydrogenase (FDH) activity. Acts as a sulfur carrier protein that transfers sulfur from IscS to the molybdenum cofactor prior to its insertion into FDH. The chain is Sulfur carrier protein FdhD from Anaeromyxobacter dehalogenans (strain 2CP-C).